A 141-amino-acid chain; its full sequence is Large ribosomal subunit protein uL11 (141 aa).

The protein belongs to the universal ribosomal protein uL11 family. As to quaternary structure, part of the ribosomal stalk of the 50S ribosomal subunit. Interacts with L10 and the large rRNA to form the base of the stalk. L10 forms an elongated spine to which L12 dimers bind in a sequential fashion forming a multimeric L10(L12)X complex. Post-translationally, one or more lysine residues are methylated.

Forms part of the ribosomal stalk which helps the ribosome interact with GTP-bound translation factors. This Chlorobium phaeovibrioides (strain DSM 265 / 1930) (Prosthecochloris vibrioformis (strain DSM 265)) protein is Large ribosomal subunit protein uL11.